The following is a 483-amino-acid chain: 6-phosphogluconate dehydrogenase, decarboxylating (483 aa).

NADP(+) contacts are provided by residues 10–15 (GLAVMG) and 33–35 (NRT). Residue Lys-38 is modified to N6-acetyllysine. Residue Ser-57 is modified to Phosphoserine. Lys-59 is subject to N6-acetyllysine. NADP(+)-binding positions include 75–77 (VKA) and Asn-103. Substrate contacts are provided by residues Asn-103 and 129–131 (SGG). At Ser-129 the chain carries Phosphoserine. Lys-184 serves as the catalytic Proton acceptor. 187-188 (HN) contacts substrate. The active-site Proton donor is Glu-191. Residues Tyr-192, Lys-261, and Arg-288 each coordinate substrate. Lys-309 is modified (N6-acetyllysine). Substrate contacts are provided by Arg-447 and His-453. Residue 478 to 481 (SSSY) coordinates NADP(+).

It belongs to the 6-phosphogluconate dehydrogenase family. As to quaternary structure, homodimer.

Its subcellular location is the cytoplasm. It carries out the reaction 6-phospho-D-gluconate + NADP(+) = D-ribulose 5-phosphate + CO2 + NADPH. It functions in the pathway carbohydrate degradation; pentose phosphate pathway; D-ribulose 5-phosphate from D-glucose 6-phosphate (oxidative stage): step 3/3. Catalyzes the oxidative decarboxylation of 6-phosphogluconate to ribulose 5-phosphate and CO(2), with concomitant reduction of NADP to NADPH. This is 6-phosphogluconate dehydrogenase, decarboxylating (PGD) from Homo sapiens (Human).